The primary structure comprises 90 residues: Large ribosomal subunit protein bL27 (90 aa).

The segment at 1 to 22 is disordered; the sequence is MAHKKAGGSTRNGRDSNPKMLG.

This sequence belongs to the bacterial ribosomal protein bL27 family.

This chain is Large ribosomal subunit protein bL27, found in Coxiella burnetii (strain CbuK_Q154) (Coxiella burnetii (strain Q154)).